The chain runs to 187 residues: MILIIDNHGQYVHLIRKNFDYMGVPAEIIPNTTDPEDVRERASGVVISGGPSRERAGNSREIIEELTGEVPILGICLGHQLMAEVFGGKVDWAAGREEYARTEVEILDHEGIFEGLPDKIVAWASHRDEVKEVPDEFVVTARSDRCEVEAMRHEELPLYGVQFHPELKFTEYGPDILKNFAKLCGEL.

Positions 1–187 (MILIIDNHGQ…KNFAKLCGEL (187 aa)) constitute a Glutamine amidotransferase type-1 domain. Cys-76 acts as the Nucleophile in catalysis. Catalysis depends on residues His-164 and Glu-166.

As to quaternary structure, heterodimer composed of a glutamine amidotransferase subunit (A) and a GMP-binding subunit (B).

The enzyme catalyses XMP + L-glutamine + ATP + H2O = GMP + L-glutamate + AMP + diphosphate + 2 H(+). It functions in the pathway purine metabolism; GMP biosynthesis; GMP from XMP (L-Gln route): step 1/1. Functionally, catalyzes the synthesis of GMP from XMP. This is GMP synthase [glutamine-hydrolyzing] subunit A from Methanopyrus kandleri (strain AV19 / DSM 6324 / JCM 9639 / NBRC 100938).